We begin with the raw amino-acid sequence, 620 residues long: Palmitoyltransferase ZDHHC17 (620 aa).

Topologically, residues 1-292 (MADALVGYEK…LKMDKEFRQK (292 aa)) are cytoplasmic. ANK repeat units lie at residues 77 to 106 (ENVT…IVDQ), 111 to 140 (LNST…DPSL), 144 to 173 (EGCS…DVDM), 177 to 207 (NGMT…SVNL), 212 to 241 (HKNT…NVDA), and 245 to 274 (KGET…AKGY). 2 helical membrane-spanning segments follow: residues 293-313 (VMLG…DLDI) and 314-334 (DSWL…QFLS). Residues 335–345 (KSFFDHSMHSA) lie on the Cytoplasmic side of the membrane. The chain crosses the membrane as a helical span at residues 346 to 366 (LPLGIYLATKFWMYITWFYWF). The Lumenal segment spans residues 367-369 (WND). Residues 370–390 (LPFVTIHLPFLLNSLALFYNF) form a helical membrane-spanning segment. Over 391 to 469 (GKSWKSDPGI…NCVGSGNHRY (79 aa)) the chain is Cytoplasmic. The DHHC domain maps to 425 to 475 (IFCSTCLIRKPIRSKHCAVCNRCIAKFDHHCPWVGNCVGSGNHRYFMGYLF). Residue Cys455 is the S-palmitoyl cysteine intermediate of the active site. A helical membrane pass occupies residues 470 to 490 (FMGYLFFLLCMICWMMYGCIC). Residues 491-504 (YWRIHCATSYTKDG) are Lumenal-facing. The helical transmembrane segment at 505–524 (FWIYITQIATCSPWMFWMFL) threads the bilayer. Residues 525–620 (NSVFHFMWVA…QTSGSGYQLV (96 aa)) lie on the Cytoplasmic side of the membrane.

Belongs to the DHHC palmitoyltransferase family. AKR/ZDHHC17 subfamily. Autopalmitoylated.

It is found in the golgi apparatus membrane. The protein localises to the cytoplasmic vesicle membrane. The protein resides in the presynaptic cell membrane. It catalyses the reaction L-cysteinyl-[protein] + hexadecanoyl-CoA = S-hexadecanoyl-L-cysteinyl-[protein] + CoA. It carries out the reaction L-cysteinyl-[protein] + tetradecanoyl-CoA = S-tetradecanoyl-L-cysteinyl-[protein] + CoA. The enzyme catalyses L-cysteinyl-[protein] + octadecanoyl-CoA = S-octadecanoyl-L-cysteinyl-[protein] + CoA. Functionally, palmitoyltransferase that catalyzes the addition of palmitate onto various protein substrates and is involved in a variety of cellular processes. Has no stringent fatty acid selectivity and in addition to palmitate can also transfer onto target proteins myristate from tetradecanoyl-CoA and stearate from octadecanoyl-CoA. Plays a role in axonogenesis. The sequence is that of Palmitoyltransferase ZDHHC17 from Danio rerio (Zebrafish).